The chain runs to 604 residues: Replication protein E1 (604 aa).

The short motif at 76–78 (KRK) is the Nuclear localization signal element. 2 positions are modified to phosphoserine; by host: S81 and S89. The DNA-binding region stretch occupies residues 144–307 (QSGDIDISYT…TILGHQSAEA (164 aa)). One can recognise an SF3 helicase domain in the interval 406–556 (VNFIMFLAAL…FPMKADNTPQ (151 aa)). 432 to 439 (GPPNTGKS) contributes to the ATP binding site. K513 participates in a covalent cross-link: Glycyl lysine isopeptide (Lys-Gly) (interchain with G-Cter in SUMO). The tract at residues 579 to 604 (DQEDEGENGESQRAFQCSTRSANEHL) is disordered. Residues 587–604 (GESQRAFQCSTRSANEHL) are compositionally biased toward polar residues.

It belongs to the papillomaviridae E1 protein family. As to quaternary structure, can form hexamers. Interacts with E2 protein; this interaction increases E1 DNA binding specificity. Interacts with host DNA polymerase subunit POLA2. Interacts with host single stranded DNA-binding protein RPA1. Interacts with host TOP1; this interaction stimulates the enzymatic activity of TOP1. Phosphorylated. In terms of processing, sumoylated.

Its subcellular location is the host nucleus. The enzyme catalyses Couples ATP hydrolysis with the unwinding of duplex DNA by translocating in the 3'-5' direction.. It carries out the reaction ATP + H2O = ADP + phosphate + H(+). In terms of biological role, ATP-dependent DNA 3'-5' helicase required for initiation of viral DNA replication. It forms a complex with the viral E2 protein. The E1-E2 complex binds to the replication origin which contains binding sites for both proteins. During the initial step, a dimer of E1 interacts with a dimer of protein E2 leading to a complex that binds the viral origin of replication with high specificity. Then, a second dimer of E1 displaces the E2 dimer in an ATP-dependent manner to form the E1 tetramer. Following this, two E1 monomers are added to each half of the site, which results in the formation of two E1 trimers on the viral ori. Subsequently, two hexamers will be created. The double hexamer acts as a bi-directional helicase machinery and unwinds the viral DNA and then recruits the host DNA polymerase to start replication. The polypeptide is Replication protein E1 (Human papillomavirus 25).